A 183-amino-acid polypeptide reads, in one-letter code: Caltractin ICL1c (183 aa).

The tract at residues 1 to 30 (MARRGQQPPPQQQQAPPTQKNQAGKFNPAE) is disordered. 4 consecutive EF-hand domains span residues 39–74 (EEVL…LGFE), 75–110 (AKNQ…RISE), 112–147 (DSKA…LGET), and 148–183 (MDDS…KTFA). Ca(2+) is bound by residues Asp52, Asp54, Thr56, Ser58, Glu63, Asp88, Asp90, Ser92, Gln94, and Glu99.

Belongs to the centrin family. As to quaternary structure, monomer.

It localises to the cytoplasm. It is found in the cytoskeleton. In terms of biological role, plays a fundamental role in microtubule organizing center structure and function. Component of the infraciliary lattice (ICL) and the ciliary basal bodies. The chain is Caltractin ICL1c (Icl1c) from Paramecium tetraurelia.